Here is a 265-residue protein sequence, read N- to C-terminus: DNA repair protein RecO (265 aa).

It belongs to the RecO family.

Functionally, involved in DNA repair and RecF pathway recombination. In Mycobacterium ulcerans (strain Agy99), this protein is DNA repair protein RecO.